The following is a 428-amino-acid chain: Metal tolerance protein 10 (428 aa).

At 1–140 the chain is on the cytoplasmic side; that stretch reads MPLNSYIFFL…EMKKLAKSER (140 aa). The chain crosses the membrane as a helical span at residues 141–161; the sequence is LAVHISNATNLVLFVAKVYAS. Topologically, residues 162 to 167 are vacuolar; that stretch reads MESRSM. The helical transmembrane segment at 168-188 threads the bilayer; it reads AVIASTLDSLLDLLSGFILWF. The Cytoplasmic portion of the chain corresponds to 189–209; the sequence is TANAMRKPNQFHYPIGKRRMQ. The helical transmembrane segment at 210–230 threads the bilayer; sequence PVGIIVFASVMATLGLQVLLE. Topologically, residues 231–248 are vacuolar; sequence SGRQLVAKSGIHMNSTEE. Residues 249 to 269 traverse the membrane as a helical segment; that stretch reads KWMIGIMVSVTIVKFLLMLYC. At 270-287 the chain is on the cytoplasmic side; that stretch reads RGFQNEIVRAYAQDHLFD. The helical transmembrane segment at 288–308 threads the bilayer; sequence VVTNSIGLATAVLAVKFYWWI. The Vacuolar portion of the chain corresponds to 309-311; it reads DPT. A helical membrane pass occupies residues 312–332; it reads GAILIALYTIATWARTVLENV. Over 333-428 the chain is Cytoplasmic; that stretch reads HSLIGRSAPP…FTHRPEHKCN (96 aa).

Belongs to the cation diffusion facilitator (CDF) transporter (TC 2.A.4) family. SLC30A subfamily.

It is found in the vacuole membrane. Functionally, involved in sequestration of excess metal in the cytoplasm into vacuoles to maintain metal homeostasis. The sequence is that of Metal tolerance protein 10 (MTP10) from Arabidopsis thaliana (Mouse-ear cress).